A 250-amino-acid chain; its full sequence is DNA repair protein RecO (250 aa).

This sequence belongs to the RecO family.

In terms of biological role, involved in DNA repair and RecF pathway recombination. This Rhodopseudomonas palustris (strain TIE-1) protein is DNA repair protein RecO.